We begin with the raw amino-acid sequence, 518 residues long: Sensor protein kinase HptS (518 aa).

A run of 2 helical transmembrane segments spans residues 20–40 (IFPV…IYIW) and 222–242 (GITL…FGFI). The Histidine kinase domain occupies 297-513 (EQLIHSIEHT…LICYKIPLSR (217 aa)). His-325 carries the post-translational modification Phosphohistidine; by autocatalysis.

Autophosphorylated.

The protein localises to the cell membrane. The catalysed reaction is ATP + protein L-histidine = ADP + protein N-phospho-L-histidine.. Functionally, member of the two-component regulatory system HptS/HptR that regulates genes involved in hexose phosphate transport system in response to changes in extracellular phosphate sources. May act as a sensor protein kinase which is autophosphorylated at a histidine residue and transfers its phosphate group to the conserved aspartic acid residue in the regulatory domain of HptS. In turn, HptS antagonizes CcpA-dependent transcription of a subset of CcpA-regulated genes involved in antibiotic susceptibility. The sequence is that of Sensor protein kinase HptS (hptS) from Staphylococcus aureus (strain bovine RF122 / ET3-1).